The following is an 89-amino-acid chain: HssA/B-like protein 10 (89 aa).

The protein belongs to the hssA/B family.

The sequence is that of HssA/B-like protein 10 (hssl10) from Dictyostelium discoideum (Social amoeba).